The sequence spans 39 residues: Large ribosomal subunit protein bL36 (39 aa).

It belongs to the bacterial ribosomal protein bL36 family.

This Lactiplantibacillus plantarum (strain ATCC BAA-793 / NCIMB 8826 / WCFS1) (Lactobacillus plantarum) protein is Large ribosomal subunit protein bL36.